A 155-amino-acid polypeptide reads, in one-letter code: Large ribosomal subunit protein uL30 (155 aa).

The protein belongs to the universal ribosomal protein uL30 family. Part of the 50S ribosomal subunit.

The polypeptide is Large ribosomal subunit protein uL30 (Pyrococcus furiosus (strain ATCC 43587 / DSM 3638 / JCM 8422 / Vc1)).